Here is a 183-residue protein sequence, read N- to C-terminus: Abscisic acid receptor PYL10 (183 aa).

Residues 20 to 172 (HELVESQCSS…NLNSLADVTE (153 aa)) form an START-like region. A disulfide bond links C27 and C153. Abscisate-binding positions include K56, 85 to 90 (ATKSTE), 112 to 118 (RLKNYSS), and E137. The short motif at 81 to 85 (SGLPA) is the Gate loop element. The Latch loop signature appears at 111 to 113 (HRL).

This sequence belongs to the PYR/PYL/RCAR abscisic acid intracellular receptor family. Monomer. Forms heterodimer with PYL13, thus antagonizing PP2Cs-binding and ABA-independent inhibition of PP2Cs. Homodimer. Binds ABA on one subunit only. Binds to CARs protein in an ABA-independent manner, both at the plasma membrane and in the nucleus. Interacts with ABI1 and HAB1, and possibly with other PP2Cs, in an ABA-independent manner.

Its subcellular location is the cytoplasm. It is found in the nucleus. The protein localises to the cell membrane. In terms of biological role, receptor for abscisic acid (ABA) required for ABA-mediated responses such as stomatal closure and germination inhibition. Inhibits the activity of group-A protein phosphatases type 2C (PP2Cs) in an ABA-independent manner but more efficiently when activated by ABA. Can be activated by both (-)-ABA and (+)-ABA. This chain is Abscisic acid receptor PYL10 (PYL10), found in Arabidopsis thaliana (Mouse-ear cress).